A 170-amino-acid polypeptide reads, in one-letter code: Adenine phosphoribosyltransferase (170 aa).

Belongs to the purine/pyrimidine phosphoribosyltransferase family. As to quaternary structure, homodimer.

It is found in the cytoplasm. The catalysed reaction is AMP + diphosphate = 5-phospho-alpha-D-ribose 1-diphosphate + adenine. It functions in the pathway purine metabolism; AMP biosynthesis via salvage pathway; AMP from adenine: step 1/1. Its function is as follows. Catalyzes a salvage reaction resulting in the formation of AMP, that is energically less costly than de novo synthesis. The chain is Adenine phosphoribosyltransferase from Maridesulfovibrio salexigens (strain ATCC 14822 / DSM 2638 / NCIMB 8403 / VKM B-1763) (Desulfovibrio salexigens).